The primary structure comprises 1855 residues: Unconventional myosin-Va (1855 aa).

Residue Ala-2 is modified to N-acetylalanine. One can recognise a Myosin N-terminal SH3-like domain in the interval 8-60; the sequence is TKFARVWIPDPEEVWKSAELLKDYKPGDKVLLLHLEEGKDLEYHLDPKTKELP. Positions 69-763 constitute a Myosin motor domain; the sequence is VGENDLTALS…QVAYLEKLRA (695 aa). ATP is bound at residue 163 to 170; that stretch reads GESGAGKT. The tract at residues 598–631 is disordered; sequence AISPTSATSSGRTPLTRTPAKPTKGRPGQMAKEH. At Ser-600 the chain carries Phosphoserine. The span at 600 to 613 shows a compositional bias: polar residues; the sequence is SPTSATSSGRTPLT. The tract at residues 643-665 is actin-binding; sequence LHLLMETLNATTPHYVRCIKPND. IQ domains are found at residues 766–788, 789–818, 814–836, 837–861, 862–883, and 885–914; these read LRAACIRIQKTIRGWLLRKKYLR, MRKAAITMQRYVRGYQARCYAKFLRRTKAA, RTKAATIIQKYWRMYVVRRRYKI, RRAATIVLQSYLRGFLARNRYRKIL, REHKAVIIQKRVRGWLARTHYK, and SMHAIIYLQCCFRRMMAKRELKKLKIEARS. 2 coiled-coil regions span residues 914-1237 and 1338-1445; these read SVER…APEV and VYEG…ELEV. Thr-1032 bears the Phosphothreonine mark. Phosphoserine is present on residues Ser-1452 and Ser-1652. Residues 1534 to 1810 enclose the Dilute domain; that stretch reads TSTINSIKKV…IRTIQMRLRD (277 aa). Thr-1760 is modified (phosphothreonine).

The protein belongs to the TRAFAC class myosin-kinesin ATPase superfamily. Myosin family. As to quaternary structure, may be a homodimer, which associates with multiple calmodulin or myosin light chains. Interacts with RIPL2, the interaction is required for its role in dendrite formation. Interacts with MLPH. Interacts with SYTL4. Interacts with MYRIP. Interacts with RAB10; mediates the transport to the plasma membrane of SLC2A4/GLUT4 storage vesicles. Interacts with FMR1; this interaction occurs in association with polyribosome. In terms of tissue distribution, detected in melanocytes.

It carries out the reaction ATP + H2O = ADP + phosphate + H(+). Processive actin-based motor that can move in large steps approximating the 36-nm pseudo-repeat of the actin filament. Can hydrolyze ATP in the presence of actin, which is essential for its function as a motor protein. Involved in melanosome transport. Also mediates the transport of vesicles to the plasma membrane. May also be required for some polarization process involved in dendrite formation. The protein is Unconventional myosin-Va (MYO5A) of Homo sapiens (Human).